Consider the following 795-residue polypeptide: Protocadherin beta-4 (795 aa).

The first 27 residues, 1 to 27 (MKKLGRIHPNRQVLAFILMVFLSQVRL), serve as a signal peptide directing secretion. Residues 28 to 689 (EPIRYSVLEE…AQADSLTVYL (662 aa)) are Extracellular-facing. 5 consecutive Cadherin domains span residues 34-132 (VLEE…SPIF), 137-241 (VLLK…APEF), 246-346 (YGVQ…PPEL), 351-450 (LTSS…APAF), and 455-560 (YTLF…SPFV). Residue asparagine 183 is glycosylated (N-linked (GlcNAc...) asparagine). Asparagine 417 and asparagine 435 each carry an N-linked (GlcNAc...) asparagine glycan. Asparagine 566 is a glycosylation site (N-linked (GlcNAc...) asparagine). Residues 567–670 (GSAPCTELVP…LVDGFSQPYL (104 aa)) form the Cadherin 6 domain. The chain crosses the membrane as a helical span at residues 690–710 (VVALASVSSLFLFSVLLFVAV). Over 711–795 (RLCRRSRAAS…PKFRNSLVFS (85 aa)) the chain is Cytoplasmic.

It is found in the cell membrane. Functionally, potential calcium-dependent cell-adhesion protein. May be involved in the establishment and maintenance of specific neuronal connections in the brain. The protein is Protocadherin beta-4 (PCDHB4) of Homo sapiens (Human).